The chain runs to 165 residues: Nucleotide-binding protein SYNW1816 (165 aa).

The protein belongs to the YajQ family.

Nucleotide-binding protein. This is Nucleotide-binding protein SYNW1816 from Parasynechococcus marenigrum (strain WH8102).